A 316-amino-acid polypeptide reads, in one-letter code: tRNA methyltransferase 10 homolog B (316 aa).

Residues 73 to 97 are a coiled coil; that stretch reads EKIVAAKKSKRKQEKERRKANRAEN. Positions 77-98 are disordered; the sequence is AAKKSKRKQEKERRKANRAENP. An SAM-dependent MTase TRM10-type domain is found at 113–310; it reads TKDKLLEAKH…KGVSSGKGYI (198 aa).

Belongs to the class IV-like SAM-binding methyltransferase superfamily. TRM10 family.

The enzyme catalyses guanosine(9) in tRNA + S-adenosyl-L-methionine = N(1)-methylguanosine(9) in tRNA + S-adenosyl-L-homocysteine + H(+). In terms of biological role, S-adenosyl-L-methionine-dependent guanine N(1)-methyltransferase that catalyzes the formation of N(1)-methylguanine at position 9 (m1G9) in tRNAs. Probably not able to catalyze formation of N(1)-methyladenine at position 9 (m1A9) in tRNAs. The chain is tRNA methyltransferase 10 homolog B (TRMT10B) from Homo sapiens (Human).